A 130-amino-acid chain; its full sequence is MTLLDPLANALSHITNSERVGKKEVYIKPASKLIGEVLRVMLENGYIGEFELIDDGRAGIYRVQLIGKINKAGAIKPRFPVKARDYEKWEKRFLPAFEFGILIVSTSQGVMTHKEALEKGIGGRLIAYVY.

The protein belongs to the universal ribosomal protein uS8 family. Part of the 30S ribosomal subunit.

Its function is as follows. One of the primary rRNA binding proteins, it binds directly to 16S rRNA central domain where it helps coordinate assembly of the platform of the 30S subunit. This chain is Small ribosomal subunit protein uS8, found in Thermococcus kodakarensis (strain ATCC BAA-918 / JCM 12380 / KOD1) (Pyrococcus kodakaraensis (strain KOD1)).